We begin with the raw amino-acid sequence, 296 residues long: Probable porphobilinogen deaminase (296 aa).

Cysteine 241 is subject to S-(dipyrrolylmethanemethyl)cysteine.

Belongs to the HMBS family. It depends on dipyrromethane as a cofactor.

It catalyses the reaction 4 porphobilinogen + H2O = hydroxymethylbilane + 4 NH4(+). Its pathway is porphyrin-containing compound metabolism; protoporphyrin-IX biosynthesis; coproporphyrinogen-III from 5-aminolevulinate: step 2/4. In terms of biological role, tetrapolymerization of the monopyrrole PBG into the hydroxymethylbilane pre-uroporphyrinogen in several discrete steps. The chain is Probable porphobilinogen deaminase from Pyrobaculum neutrophilum (strain DSM 2338 / JCM 9278 / NBRC 100436 / V24Sta) (Thermoproteus neutrophilus).